Consider the following 319-residue polypeptide: Nucleotide-binding protein Rru_A3448 (319 aa).

The tract at residues 1 to 34 (MGRSASLLRLRDPAPLPTDIAPDPAEAPPSPAAD) is disordered. 42–49 (GMSGAGRT) lines the ATP pocket. 90–93 (DTRT) is a binding site for GTP.

This sequence belongs to the RapZ-like family.

In terms of biological role, displays ATPase and GTPase activities. The sequence is that of Nucleotide-binding protein Rru_A3448 from Rhodospirillum rubrum (strain ATCC 11170 / ATH 1.1.1 / DSM 467 / LMG 4362 / NCIMB 8255 / S1).